Here is a 309-residue protein sequence, read N- to C-terminus: D-allose kinase (309 aa).

ATP contacts are provided by residues 10-17 (GVDMGATH) and 142-149 (GMGFAVWM).

The protein belongs to the ROK (NagC/XylR) family.

It carries out the reaction D-allose + ATP = D-allose 6-phosphate + ADP + H(+). The protein operates within carbohydrate degradation; D-allose degradation. In terms of biological role, catalyzes the phosphorylation of D-allose to D-allose 6-phosphate. Also has low level glucokinase activity in vitro. In Escherichia coli (strain K12), this protein is D-allose kinase.